The chain runs to 943 residues: Neutral alpha-glucosidase AB (943 aa).

The first 23 residues, 1-23, serve as a signal peptide directing secretion; the sequence is MRKLVILIILSIVCSLFIGSIES. The interval 186–231 is disordered; sequence FEPISDKPQPLPPKEKKSEEENKEANQEEDNNNNNNDNNEEQQVST. Positions 198–211 are enriched in basic and acidic residues; sequence PKEKKSEEENKEAN. The Nucleophile role is filled by aspartate 540. The active site involves glutamate 543. Residue aspartate 617 is the Proton donor of the active site. N-linked (GlcNAc...) asparagine glycans are attached at residues asparagine 878, asparagine 887, and asparagine 907.

Belongs to the glycosyl hydrolase 31 family.

The protein localises to the endoplasmic reticulum. It localises to the golgi apparatus. It carries out the reaction N(4)-(alpha-D-Glc-(1-&gt;3)-alpha-D-Man-(1-&gt;2)-alpha-D-Man-(1-&gt;2)-alpha-D-Man-(1-&gt;3)-[alpha-D-Man-(1-&gt;2)-alpha-D-Man-(1-&gt;3)-[alpha-D-Man-(1-&gt;2)-alpha-D-Man-(1-&gt;6)]-alpha-D-Man-(1-&gt;6)]-beta-D-Man-(1-&gt;4)-beta-D-GlcNAc-(1-&gt;4)-beta-D-GlcNAc)-L-asparaginyl-[protein] + H2O = N(4)-(alpha-D-Man-(1-&gt;2)-alpha-D-Man-(1-&gt;2)-alpha-D-Man-(1-&gt;3)-[alpha-D-Man-(1-&gt;2)-alpha-D-Man-(1-&gt;3)-[alpha-D-Man-(1-&gt;2)-alpha-D-Man-(1-&gt;6)]-alpha-D-Man-(1-&gt;6)]-beta-D-Man-(1-&gt;4)-beta-D-GlcNAc-(1-&gt;4)-beta-D-GlcNAc)-L-asparaginyl-[protein] (N-glucan mannose isomer 9A1,2,3B1,2,3) + beta-D-glucose. The catalysed reaction is N(4)-(alpha-D-Glc-(1-&gt;3)-alpha-D-Glc-(1-&gt;3)-alpha-D-Man-(1-&gt;2)-alpha-D-Man-(1-&gt;2)-alpha-D-Man-(1-&gt;3)-[alpha-D-Man-(1-&gt;2)-alpha-D-Man-(1-&gt;3)-[alpha-D-Man-(1-&gt;2)-alpha-D-Man-(1-&gt;6)]-alpha-D-Man-(1-&gt;6)]-beta-D-Man-(1-&gt;4)-beta-D-GlcNAc-(1-&gt;4)-beta-D-GlcNAc)-L-asparaginyl-[protein] + H2O = N(4)-(alpha-D-Glc-(1-&gt;3)-alpha-D-Man-(1-&gt;2)-alpha-D-Man-(1-&gt;2)-alpha-D-Man-(1-&gt;3)-[alpha-D-Man-(1-&gt;2)-alpha-D-Man-(1-&gt;3)-[alpha-D-Man-(1-&gt;2)-alpha-D-Man-(1-&gt;6)]-alpha-D-Man-(1-&gt;6)]-beta-D-Man-(1-&gt;4)-beta-D-GlcNAc-(1-&gt;4)-beta-D-GlcNAc)-L-asparaginyl-[protein] + beta-D-glucose. Its pathway is glycan metabolism; N-glycan metabolism. In terms of biological role, cleaves sequentially the 2 innermost alpha-1,3-linked glucose residues from N-linked oligosaccharides on newly synthesized glycoproteins. The polypeptide is Neutral alpha-glucosidase AB (modA) (Dictyostelium discoideum (Social amoeba)).